We begin with the raw amino-acid sequence, 412 residues long: Multidrug resistance protein MdtG (412 aa).

The next 10 helical transmembrane spans lie at 20-40 (LFVA…IMPF), 62-82 (LVFS…GGLA), 96-116 (LGMS…QFLI), 119-139 (ALLG…ATQI), 150-170 (TLST…GLLA), 177-197 (PVFF…LYFI), 225-245 (VLCL…IAPI), 260-280 (LAFI…MSAP), 294-314 (ILVA…LVQT), and 382-402 (TVFF…YWCL).

Belongs to the major facilitator superfamily. DHA1 family. MdtG (TC 2.A.1.2.20) subfamily.

Its subcellular location is the cell inner membrane. This is Multidrug resistance protein MdtG from Rahnella sp. (strain Y9602).